Reading from the N-terminus, the 126-residue chain is Fluoride-specific ion channel FluC (126 aa).

The next 2 membrane-spanning stretches (helical) occupy residues 2–22 (IKSLFAVIIGGSVGCTLRWLL) and 36–56 (GTLVVNLLAGLIIGTALAYFL). Na(+) is bound by residues G75 and S78. A run of 2 helical transmembrane segments spans residues 80–100 (FSTFSVEVFALLQAGNYIWAL) and 105–125 (VHVIGSLIMTALGFFIITILF).

The protein belongs to the fluoride channel Fluc/FEX (TC 1.A.43) family. As to quaternary structure, homodimer.

The protein resides in the cell inner membrane. It catalyses the reaction fluoride(in) = fluoride(out). Na(+) is not transported, but it plays an essential structural role and its presence is essential for fluoride channel function. Functionally, fluoride-specific ion channel. Important for reducing fluoride concentration in the cell, thus reducing its toxicity. Is highly specific for fluoride ions and cannot transport chloride ions. The sequence is that of Fluoride-specific ion channel FluC from Escherichia coli O1:K1 / APEC.